The chain runs to 180 residues: Crossover junction endodeoxyribonuclease RuvC (180 aa).

Active-site residues include Asp-7, Glu-66, and Asp-138. Residues Asp-7, Glu-66, and Asp-138 each contribute to the Mg(2+) site.

The protein belongs to the RuvC family. As to quaternary structure, homodimer which binds Holliday junction (HJ) DNA. The HJ becomes 2-fold symmetrical on binding to RuvC with unstacked arms; it has a different conformation from HJ DNA in complex with RuvA. In the full resolvosome a probable DNA-RuvA(4)-RuvB(12)-RuvC(2) complex forms which resolves the HJ. The cofactor is Mg(2+).

It is found in the cytoplasm. The catalysed reaction is Endonucleolytic cleavage at a junction such as a reciprocal single-stranded crossover between two homologous DNA duplexes (Holliday junction).. Functionally, the RuvA-RuvB-RuvC complex processes Holliday junction (HJ) DNA during genetic recombination and DNA repair. Endonuclease that resolves HJ intermediates. Cleaves cruciform DNA by making single-stranded nicks across the HJ at symmetrical positions within the homologous arms, yielding a 5'-phosphate and a 3'-hydroxyl group; requires a central core of homology in the junction. The consensus cleavage sequence is 5'-(A/T)TT(C/G)-3'. Cleavage occurs on the 3'-side of the TT dinucleotide at the point of strand exchange. HJ branch migration catalyzed by RuvA-RuvB allows RuvC to scan DNA until it finds its consensus sequence, where it cleaves and resolves the cruciform DNA. This Burkholderia orbicola (strain MC0-3) protein is Crossover junction endodeoxyribonuclease RuvC.